Here is a 158-residue protein sequence, read N- to C-terminus: Ribonuclease H (158 aa).

The 142-residue stretch at 3 to 144 (ELKLIHIFTD…CDQLARAAAE (142 aa)) folds into the RNase H type-1 domain. 4 residues coordinate Mg(2+): Asp-12, Glu-50, Asp-72, and Asp-136. Residues 137–158 (QLARAAAEASPTQVDEGYQPES) form a disordered region.

Belongs to the RNase H family. As to quaternary structure, monomer. Mg(2+) is required as a cofactor.

The protein localises to the cytoplasm. The enzyme catalyses Endonucleolytic cleavage to 5'-phosphomonoester.. In terms of biological role, endonuclease that specifically degrades the RNA of RNA-DNA hybrids. This Shewanella sp. (strain ANA-3) protein is Ribonuclease H.